The chain runs to 88 residues: Small ribosomal subunit protein bS20 (88 aa).

Belongs to the bacterial ribosomal protein bS20 family.

In terms of biological role, binds directly to 16S ribosomal RNA. This Renibacterium salmoninarum (strain ATCC 33209 / DSM 20767 / JCM 11484 / NBRC 15589 / NCIMB 2235) protein is Small ribosomal subunit protein bS20.